The chain runs to 1097 residues: DNA-directed RNA polymerase subunit beta (1097 aa).

Belongs to the RNA polymerase beta chain family. In terms of assembly, in plastids the minimal PEP RNA polymerase catalytic core is composed of four subunits: alpha, beta, beta', and beta''. When a (nuclear-encoded) sigma factor is associated with the core the holoenzyme is formed, which can initiate transcription.

It localises to the plastid. It is found in the chloroplast. The catalysed reaction is RNA(n) + a ribonucleoside 5'-triphosphate = RNA(n+1) + diphosphate. DNA-dependent RNA polymerase catalyzes the transcription of DNA into RNA using the four ribonucleoside triphosphates as substrates. In Rhodomonas salina (Cryptomonas salina), this protein is DNA-directed RNA polymerase subunit beta.